A 56-amino-acid chain; its full sequence is Large ribosomal subunit protein bL33 (56 aa).

This sequence belongs to the bacterial ribosomal protein bL33 family.

This Haemophilus influenzae (strain 86-028NP) protein is Large ribosomal subunit protein bL33.